A 588-amino-acid polypeptide reads, in one-letter code: UvrABC system protein C (588 aa).

In terms of domain architecture, GIY-YIG spans 12-89; sequence SKPGCYLYLN…IKKYRPKYNV (78 aa). Residues 194–229 enclose the UVR domain; that stretch reads NEVKTLLTNQMHKAAENLQFEEAQRIKEQIISLDFT.

It belongs to the UvrC family. Interacts with UvrB in an incision complex.

It localises to the cytoplasm. The UvrABC repair system catalyzes the recognition and processing of DNA lesions. UvrC both incises the 5' and 3' sides of the lesion. The N-terminal half is responsible for the 3' incision and the C-terminal half is responsible for the 5' incision. The polypeptide is UvrABC system protein C (Mesoplasma florum (strain ATCC 33453 / NBRC 100688 / NCTC 11704 / L1) (Acholeplasma florum)).